Consider the following 394-residue polypeptide: Elongation factor Tu (394 aa).

Residues 10–204 form the tr-type G domain; it reads KPHINVGTIG…HLDNYIPEPK (195 aa). The tract at residues 19–26 is G1; that stretch reads GHVDHGKT. GTP is bound at residue 19–26; sequence GHVDHGKT. Thr26 is a binding site for Mg(2+). The segment at 60 to 64 is G2; the sequence is GITIN. The segment at 81 to 84 is G3; the sequence is DCPG. Residues 81 to 85 and 136 to 139 each bind GTP; these read DCPGH and NKCD. Residues 136–139 are G4; that stretch reads NKCD. The G5 stretch occupies residues 174 to 176; sequence SAL.

Belongs to the TRAFAC class translation factor GTPase superfamily. Classic translation factor GTPase family. EF-Tu/EF-1A subfamily. In terms of assembly, monomer.

The protein resides in the cytoplasm. The catalysed reaction is GTP + H2O = GDP + phosphate + H(+). Its function is as follows. GTP hydrolase that promotes the GTP-dependent binding of aminoacyl-tRNA to the A-site of ribosomes during protein biosynthesis. The polypeptide is Elongation factor Tu (Wigglesworthia glossinidia brevipalpis).